A 1086-amino-acid polypeptide reads, in one-letter code: Ribonuclease 3 (1086 aa).

Disordered regions lie at residues 1–77 (MSDE…DSPR) and 158–233 (CHSM…LRNF). The span at 13–23 (PKHKRARRKKY) shows a compositional bias: basic residues. Residues 24 to 35 (QKEYQERHKEEM) are compositionally biased toward basic and acidic residues. Residues 43–53 (FQNQPSTSSAP) show a composition bias toward polar residues. A compositionally biased stretch (basic residues) spans 159 to 168 (HSMKGRKTPK). Over residues 181 to 190 (VSDDSNDSQD) the composition is skewed to acidic residues. Residues 191-201 (EASTSEPTNRQ) are compositionally biased toward polar residues. The span at 203–217 (PEADKTGEVKDEKQT) shows a compositional bias: basic and acidic residues. RNase III domains are found at residues 607–781 (LDVF…LDGG) and 833–957 (FHAL…VDRG). Positions 694, 767, 770, 873, 943, and 946 each coordinate Mg(2+). The 76-residue stretch at 984–1059 (DAKSHLQQWC…AELALANLES (76 aa)) folds into the DRBM domain.

The protein belongs to the ribonuclease III family. Mg(2+) is required as a cofactor. The cofactor is Mn(2+).

The protein resides in the nucleus. It carries out the reaction Endonucleolytic cleavage to 5'-phosphomonoester.. Functionally, executes the initial step of microRNA (miRNA) processing in the nucleus, that is the cleavage of pri-miRNA to release pre-miRNA. Involved in pre-rRNA processing. Cleaves double-strand RNA and does not cleave single-strand RNA. Involved in fertility. Required for the function or synthesis of the let-7 miRNA. In Caenorhabditis elegans, this protein is Ribonuclease 3 (drsh-1).